A 103-amino-acid chain; its full sequence is Ig kappa-b4 chain C region (103 aa).

An Ig-like domain is found at 5-95; sequence PTVLIFPPAA…KVTQGTTSVV (91 aa). Cysteine 26 and cysteine 85 form a disulfide bridge.

The sequence is that of Ig kappa-b4 chain C region from Oryctolagus cuniculus (Rabbit).